A 188-amino-acid chain; its full sequence is Peptidyl-tRNA hydrolase (188 aa).

Phenylalanine 15 is a tRNA binding site. Residue histidine 20 is the Proton acceptor of the active site. Tyrosine 64, asparagine 66, and asparagine 112 together coordinate tRNA.

This sequence belongs to the PTH family. In terms of assembly, monomer.

The protein resides in the cytoplasm. The enzyme catalyses an N-acyl-L-alpha-aminoacyl-tRNA + H2O = an N-acyl-L-amino acid + a tRNA + H(+). Its function is as follows. Hydrolyzes ribosome-free peptidyl-tRNAs (with 1 or more amino acids incorporated), which drop off the ribosome during protein synthesis, or as a result of ribosome stalling. In terms of biological role, catalyzes the release of premature peptidyl moieties from peptidyl-tRNA molecules trapped in stalled 50S ribosomal subunits, and thus maintains levels of free tRNAs and 50S ribosomes. The protein is Peptidyl-tRNA hydrolase of Borrelia recurrentis (strain A1).